Consider the following 75-residue polypeptide: Small ribosomal subunit protein bS18 (75 aa).

This sequence belongs to the bacterial ribosomal protein bS18 family. In terms of assembly, part of the 30S ribosomal subunit. Forms a tight heterodimer with protein bS6.

Its function is as follows. Binds as a heterodimer with protein bS6 to the central domain of the 16S rRNA, where it helps stabilize the platform of the 30S subunit. The protein is Small ribosomal subunit protein bS18 of Anaplasma marginale (strain St. Maries).